The chain runs to 658 residues: Carnitine O-palmitoyltransferase 2, mitochondrial (658 aa).

The transit peptide at 1-25 (MVARLLLRSWSRGLAVGPGAPCRPL) directs the protein to the mitochondrion. Residues 26 to 178 (STGFEPSQYL…DLLEPEVFHL (153 aa)) lie on the Mitochondrial matrix side of the membrane. Position 69 is an N6-succinyllysine (lysine 69). Residue lysine 79 is modified to N6-acetyllysine. Residue lysine 85 is modified to N6-succinyllysine. Residues 179 to 208 (NPAKSDTDTFKRFIRFVPSFLSWYGAYLVN) constitute an intramembrane region (note=Mitochondrial inner membrane). The Mitochondrial matrix portion of the chain corresponds to 209–658 (AYPLDMSQYY…DALEGKMIKT (450 aa)). Lysine 239 is subject to N6-acetyllysine; alternate. The residue at position 239 (lysine 239) is an N6-succinyllysine; alternate. The Proton acceptor role is filled by histidine 372. Lysine 418 is modified (N6-acetyllysine; alternate). Lysine 418 is modified (N6-succinyllysine; alternate). 2 positions are modified to N6-succinyllysine: lysine 424 and lysine 439. 452–464 (GREFLKKQKLSPD) lines the CoA pocket. 3 residues coordinate (R)-carnitine: tyrosine 486, serine 488, and threonine 499. Position 510 is an N6-acetyllysine; alternate (lysine 510). Lysine 510 is modified (N6-succinyllysine; alternate).

The protein belongs to the carnitine/choline acetyltransferase family.

Its subcellular location is the mitochondrion inner membrane. The enzyme catalyses (R)-carnitine + hexadecanoyl-CoA = O-hexadecanoyl-(R)-carnitine + CoA. It carries out the reaction octanoyl-CoA + (R)-carnitine = O-octanoyl-(R)-carnitine + CoA. The catalysed reaction is decanoyl-CoA + (R)-carnitine = O-decanoyl-(R)-carnitine + CoA. It catalyses the reaction dodecanoyl-CoA + (R)-carnitine = O-dodecanoyl-R-carnitine + CoA. The enzyme catalyses tetradecanoyl-CoA + (R)-carnitine = O-tetradecanoyl-(R)-carnitine + CoA. It carries out the reaction (R)-carnitine + octadecanoyl-CoA = O-octadecanoyl-(R)-carnitine + CoA. The catalysed reaction is eicosanoyl-CoA + (R)-carnitine = O-eicosanoyl-(R)-carnitine + CoA. It catalyses the reaction (9Z)-tetradecenoyl-CoA + (R)-carnitine = O-(9Z)-tetradecenoyl-(R)-carnitine + CoA. The enzyme catalyses (5Z)-tetradecenoyl-CoA + (R)-carnitine = O-(5Z)-tetradecenoyl-(R)-carnitine + CoA. It carries out the reaction (R)-carnitine + (9Z)-octadecenoyl-CoA = O-(9Z)-octadecenoyl-(R)-carnitine + CoA. The catalysed reaction is 4,8-dimethylnonanoyl-CoA + (R)-carnitine = O-4,8-dimethylnonanoyl-(R)-carnitine + CoA. Its pathway is lipid metabolism; fatty acid beta-oxidation. Involved in the intramitochondrial synthesis of acylcarnitines from accumulated acyl-CoA metabolites. Reconverts acylcarnitines back into the respective acyl-CoA esters that can then undergo beta-oxidation, an essential step for the mitochondrial uptake of long-chain fatty acids and their subsequent beta-oxidation in the mitochondrion. Active with medium (C8-C12) and long-chain (C14-C18) acyl-CoA esters. This chain is Carnitine O-palmitoyltransferase 2, mitochondrial (CPT2), found in Bos taurus (Bovine).